The sequence spans 395 residues: Demethylmacrocin O-methyltransferase (395 aa).

It carries out the reaction demethylmacrocin + S-adenosyl-L-methionine = macrocin + S-adenosyl-L-homocysteine + H(+). The protein operates within antibiotic biosynthesis; tylosin biosynthesis. Its function is as follows. O-methyltransferase that catalyzes the conversion of demethylmacrocin to macrocin, the penultimate step of tylosin antibiotic biosynthesis. Also able to mediate the conversion of demethyllactenocin to lactenocin. In Streptomyces fradiae (Streptomyces roseoflavus), this protein is Demethylmacrocin O-methyltransferase (tylE).